The sequence spans 51 residues: Photosystem I reaction center subunit IX (51 aa).

A helical transmembrane segment spans residues 17–37 (FFSTAPVIALVFFTLTAGFLV).

It belongs to the PsaJ family.

The protein localises to the cellular thylakoid membrane. Functionally, may help in the organization of the PsaE and PsaF subunits. The protein is Photosystem I reaction center subunit IX of Acaryochloris marina (strain MBIC 11017).